Consider the following 427-residue polypeptide: Ceramide Synthase FUM18 (427 aa).

The N-linked (GlcNAc...) asparagine glycan is linked to Asn-20. A run of 6 helical transmembrane segments spans residues 38-58 (ILPL…IHIS), 131-151 (EQGW…LIWA), 173-193 (GLIK…VISV), 202-222 (YWLN…CYVY), 250-270 (YLGF…TWIV), and 335-355 (VSIL…FGFI). The TLC domain occupies 124 to 364 (RKVVRFSEQG…ICKVAIGVLD (241 aa)). Positions 373 to 406 (SDVESDEEDSEPVANGSGWQQSQLQPGRRVGSNG) are disordered. A glycan (N-linked (GlcNAc...) asparagine) is linked at Asn-387.

This sequence belongs to the sphingosine N-acyltransferase family.

Its subcellular location is the endoplasmic reticulum membrane. The protein operates within mycotoxin biosynthesis. Its function is as follows. Ceramide synthase; part of the gene cluster that mediates the biosynthesis of fumonisins B1 (FB1), B2 (FB2), B3 (FB3), and B4 (FB4), which are carcinogenic mycotoxins. Plays a role in self-protection from FB1 toxicity by contributing to ceramide synthesis. The biosynthesis starts with the FUM1-catalyzed carbon chain assembly from one molecule of acetyl-CoA, eight molecules of malonyl-CoA, and two molecules of methionine (in S-adenosyl form). The C18 polyketide chain is released from the enzyme by a nucleophilic attack of a carbanion, which is derived from R-carbon of alanine by decarboxylation, on the carbonyl carbon of polyketide acyl chain. This step is catalyzed by the pyridoxal 5'-phosphate-dependent aminoacyl transferase FUM8. The resultant 3-keto intermediate is then stereospecifically reduced to a 3-hydroxyl product by reductase FUM13. Subsequent oxidations at C-10 by the cytochrome P450 monooxygenase FUM2, C-14 and C-15 by FUM6, FUM12 or FUM15, tricarballylic esterification of the hydroxyl groups on C-14 and C-15 by acyltransferase FUM14, and C-5 hydroxylation by 2-keto-glutarate-dependent dioxygenase FUM3 furnish the biosynthesis of fumonisins. The tricarballylic moieties are most likely derived from the citric acid cycle, and their addition to the carbon backbone may involve FUM7, FUM10, FUM11 and FUM14. The chain is Ceramide Synthase FUM18 from Gibberella moniliformis (strain M3125 / FGSC 7600) (Maize ear and stalk rot fungus).